The following is a 666-amino-acid chain: Semaphorin-7A (666 aa).

Residues 1-21 (MTPPPPGRAAPSAPRARVPGP) are disordered. The signal sequence occupies residues 1-44 (MTPPPPGRAAPSAPRARVPGPPARLGLPLRLRLLLLLWAAAASA). Low complexity predominate over residues 9-21 (AAPSAPRARVPGP). A Sema domain is found at 53–490 (RIFAVWKGHV…SQWEVSQVPL (438 aa)). An N-linked (GlcNAc...) asparagine glycan is attached at Asn105. Cys120 and Cys126 are oxidised to a cystine. Arg135 carries the asymmetric dimethylarginine modification. Cys143 and Cys152 are disulfide-bonded. N-linked (GlcNAc...) asparagine glycosylation is found at Asn157 and Asn258. 7 disulfide bridges follow: Cys266–Cys366, Cys291–Cys335, Cys493–Cys511, Cys500–Cys541, Cys503–Cys518, Cys566–Cys613, and Cys587–Cys596. Residues 267–269 (RGD) are interaction with integrins. The short motif at 267-269 (RGD) is the Cell attachment site element. Asn330 is a glycosylation site (N-linked (GlcNAc...) asparagine). Residues 544-629 (PKPDKAPLQK…YFREAQHWQL (86 aa)) enclose the Ig-like C2-type domain. N-linked (GlcNAc...) asparagine glycosylation is present at Asn602. Residue Ala648 is the site of GPI-anchor amidated alanine attachment. Positions 649-666 (ASLWLGVLPTLTLGLLVH) are cleaved as a propeptide — removed in mature form.

The protein belongs to the semaphorin family. In terms of assembly, interacts with ITGA1 and ITGB1. Interacts with PLXNC1. In terms of tissue distribution, detected in skin keratinocytes and on endothelial cells from skin blood vessels (at protein level). Expressed in fibroblasts, keratinocytes, melanocytes, placenta, testis, ovary, spleen, brain, spinal cord, lung, heart, adrenal gland, lymph nodes, thymus, intestine and kidney.

It localises to the cell membrane. Its function is as follows. Plays an important role in integrin-mediated signaling and functions both in regulating cell migration and immune responses. Promotes formation of focal adhesion complexes, activation of the protein kinase PTK2/FAK1 and subsequent phosphorylation of MAPK1 and MAPK3. Promotes production of pro-inflammatory cytokines by monocytes and macrophages. Plays an important role in modulating inflammation and T-cell-mediated immune responses. Promotes axon growth in the embryonic olfactory bulb. Promotes attachment, spreading and dendrite outgrowth in melanocytes. The chain is Semaphorin-7A (SEMA7A) from Homo sapiens (Human).